Here is a 274-residue protein sequence, read N- to C-terminus: Shikimate dehydrogenase (NADP(+)) (274 aa).

Shikimate contacts are provided by residues 14–16 and Thr61; that span reads SKS. The Proton acceptor role is filled by Lys65. Glu77 contacts NADP(+). Residues Asn86 and Asp102 each contribute to the shikimate site. Residues 126–130, 149–154, and Met212 each bind NADP(+); these read GAGGA and NRTLEK. Tyr214 contacts shikimate. Gly237 is a binding site for NADP(+).

This sequence belongs to the shikimate dehydrogenase family. Homodimer.

The enzyme catalyses shikimate + NADP(+) = 3-dehydroshikimate + NADPH + H(+). The protein operates within metabolic intermediate biosynthesis; chorismate biosynthesis; chorismate from D-erythrose 4-phosphate and phosphoenolpyruvate: step 4/7. In terms of biological role, involved in the biosynthesis of the chorismate, which leads to the biosynthesis of aromatic amino acids. Catalyzes the reversible NADPH linked reduction of 3-dehydroshikimate (DHSA) to yield shikimate (SA). In Actinobacillus pleuropneumoniae serotype 5b (strain L20), this protein is Shikimate dehydrogenase (NADP(+)).